A 354-amino-acid polypeptide reads, in one-letter code: Endo-1,4-beta-xylanase 1 (354 aa).

The region spanning 19–339 (SGLDAAMKAA…KPSYTSSLNT (321 aa)) is the GH10 domain. An N-linked (GlcNAc...) asparagine glycan is attached at Asn-117. Glu-147 functions as the Proton donor in the catalytic mechanism. The active-site Nucleophile is Glu-261. A disulfide bond links Cys-289 and Cys-295.

It belongs to the glycosyl hydrolase 10 (cellulase F) family.

Its subcellular location is the secreted. It catalyses the reaction Endohydrolysis of (1-&gt;4)-beta-D-xylosidic linkages in xylans.. It functions in the pathway glycan degradation; xylan degradation. Functionally, endo-1,4-beta-xylanase involved in the hydrolysis of xylan, a major structural heterogeneous polysaccharide found in plant biomass representing the second most abundant polysaccharide in the biosphere, after cellulose. Plays an important role in causing fusarium head blight (FHB) on cereal crops. The chain is Endo-1,4-beta-xylanase 1 (XYL1) from Gibberella zeae (strain ATCC MYA-4620 / CBS 123657 / FGSC 9075 / NRRL 31084 / PH-1) (Wheat head blight fungus).